Consider the following 341-residue polypeptide: Long-chain acyl-[acyl-carrier-protein] reductase (341 aa).

It belongs to the short-chain dehydrogenases/reductases (SDR) family. Requires a divalent metal cation as cofactor.

It carries out the reaction a long-chain fatty aldehyde + holo-[ACP] + NADP(+) = a long-chain fatty acyl-[ACP] + NADPH + H(+). It catalyses the reaction a long-chain fatty aldehyde + holo-[ACP] + NAD(+) = a long-chain fatty acyl-[ACP] + NADH + H(+). Its function is as follows. Catalyzes the NADP-dependent reduction of long-chain acyl-ACP to the corresponding fatty aldehyde. Involved in the biosynthesis of alkanes, mainly heptadecane and pentadecane, by producing the fatty aldehydes used by aldehyde decarbonylase. In Synechococcus elongatus (strain ATCC 33912 / PCC 7942 / FACHB-805) (Anacystis nidulans R2), this protein is Long-chain acyl-[acyl-carrier-protein] reductase.